The sequence spans 664 residues: MDNKLEKMKELVEELNQYAYEYYVLDNPSISDKEYDLKYDELVILEKKTEVTLPYSPTQRVGDKILGEFSKYTHKGRLWSLDKAQNMEQLIEWHNRNLKVIEQYNSMSEDKLPELRYIVTKKFDGLTVNCTYDENGILIKSATRGTGIIGEDITAQIKTIKTVPLKIKNSYVIEVHGEAIMTKTAFEEYNKAAQVPLKNLRNGAAGALRNLDIKETARRNLSAFFYDVGYNEGPEFKSYREMMNFIRNMGLPQDKYIKECTNMEEVEKEIEYIESIRGELDYDIDGAVIVVDDIKTREILGYTIKFPKWAIAYKFEAKEITTKLLDVEWNVGRSGRVTPTALLEPVELGGVTVKRATLNNMDDIKRKNVKLGAKVLVRRSNDVIPEIMGVVEESLEESEEIQAPDRCPYCNSHLVQNGVHYYCENTLSCKPQMVKSIVHFASREAMNIAGFSEKTAEQLFEKLDIKSIADLYKIKKEELLTLEKFKDKKSQNLIDAIQNSKNCDLASFIYALGIPNVGKKTANDLVMKFKTLESIKNTTIEQLVEVPDVGEIVAKSIYDFFEDEKIISNIEELLNLGVKPYYEEERIDENPFMDKTIVVTGSLNNYSRGEIKDKLQSLGAKVSSSVSKNTDYVLVGEKPGSKYEKAIELGVKVINEEEFSNKIK.

NAD(+) is bound by residues 32-36 (DKEYD) and 80-81 (SL). Catalysis depends on Lys-122, which acts as the N6-AMP-lysine intermediate. NAD(+) contacts are provided by Arg-144, Glu-178, and Lys-314. Residues Cys-407, Cys-410, Cys-423, and Cys-429 each coordinate Zn(2+). Positions 587–664 (IDENPFMDKT…NEEEFSNKIK (78 aa)) constitute a BRCT domain.

The protein belongs to the NAD-dependent DNA ligase family. LigA subfamily. It depends on Mg(2+) as a cofactor. Mn(2+) serves as cofactor.

It carries out the reaction NAD(+) + (deoxyribonucleotide)n-3'-hydroxyl + 5'-phospho-(deoxyribonucleotide)m = (deoxyribonucleotide)n+m + AMP + beta-nicotinamide D-nucleotide.. DNA ligase that catalyzes the formation of phosphodiester linkages between 5'-phosphoryl and 3'-hydroxyl groups in double-stranded DNA using NAD as a coenzyme and as the energy source for the reaction. It is essential for DNA replication and repair of damaged DNA. The sequence is that of DNA ligase from Clostridium botulinum (strain Langeland / NCTC 10281 / Type F).